Reading from the N-terminus, the 390-residue chain is tRNA(Met) cytidine acetate ligase (390 aa).

Residues 7-20 (ITEY…HIYH), G101, N152, and R177 each bind ATP.

The protein belongs to the TmcAL family.

It is found in the cytoplasm. The enzyme catalyses cytidine(34) in elongator tRNA(Met) + acetate + ATP = N(4)-acetylcytidine(34) in elongator tRNA(Met) + AMP + diphosphate. Catalyzes the formation of N(4)-acetylcytidine (ac(4)C) at the wobble position of elongator tRNA(Met), using acetate and ATP as substrates. First activates an acetate ion to form acetyladenylate (Ac-AMP) and then transfers the acetyl group to tRNA to form ac(4)C34. The chain is tRNA(Met) cytidine acetate ligase from Leuconostoc mesenteroides subsp. mesenteroides (strain ATCC 8293 / DSM 20343 / BCRC 11652 / CCM 1803 / JCM 6124 / NCDO 523 / NBRC 100496 / NCIMB 8023 / NCTC 12954 / NRRL B-1118 / 37Y).